A 211-amino-acid chain; its full sequence is ATP phosphoribosyltransferase (211 aa).

Belongs to the ATP phosphoribosyltransferase family. Short subfamily. Heteromultimer composed of HisG and HisZ subunits.

It is found in the cytoplasm. The enzyme catalyses 1-(5-phospho-beta-D-ribosyl)-ATP + diphosphate = 5-phospho-alpha-D-ribose 1-diphosphate + ATP. Its pathway is amino-acid biosynthesis; L-histidine biosynthesis; L-histidine from 5-phospho-alpha-D-ribose 1-diphosphate: step 1/9. In terms of biological role, catalyzes the condensation of ATP and 5-phosphoribose 1-diphosphate to form N'-(5'-phosphoribosyl)-ATP (PR-ATP). Has a crucial role in the pathway because the rate of histidine biosynthesis seems to be controlled primarily by regulation of HisG enzymatic activity. In Pseudomonas putida (strain W619), this protein is ATP phosphoribosyltransferase.